The chain runs to 369 residues: GTPase Obg (369 aa).

The Obg domain occupies 1–158; it reads MFTDVVELTV…RRIKLDLKLI (158 aa). The interval 126 to 146 is disordered; sequence NTHFKSSTNQRPTYAQPGEKG. The segment covering 128–138 has biased composition (polar residues); it reads HFKSSTNQRPT. Residues 159 to 362 enclose the OBG-type G domain; sequence ADVGLVGFPN…LKHALFNLVQ (204 aa). GTP-binding positions include 165-172, 190-194, 212-215, 280-283, and 343-345; these read GFPNVGKS, FTTLT, DIPG, TRAD, and SSA. Positions 172 and 192 each coordinate Mg(2+).

It belongs to the TRAFAC class OBG-HflX-like GTPase superfamily. OBG GTPase family. In terms of assembly, monomer. Mg(2+) is required as a cofactor.

The protein localises to the cytoplasm. An essential GTPase which binds GTP, GDP and possibly (p)ppGpp with moderate affinity, with high nucleotide exchange rates and a fairly low GTP hydrolysis rate. Plays a role in control of the cell cycle, stress response, ribosome biogenesis and in those bacteria that undergo differentiation, in morphogenesis control. In Sulfurimonas denitrificans (strain ATCC 33889 / DSM 1251) (Thiomicrospira denitrificans (strain ATCC 33889 / DSM 1251)), this protein is GTPase Obg.